A 117-amino-acid polypeptide reads, in one-letter code: DNA polymerase epsilon subunit 4 (117 aa).

The segment at 1 to 36 is disordered; the sequence is MAAAAAAGSGTPREEEGPAGEAAASQPQAPTSVPGA. Position 2 is an N-acetylalanine (Ala2). Phosphothreonine is present on Thr11. The span at 19–30 shows a compositional bias: low complexity; sequence AGEAAASQPQAP. At Ser25 the chain carries Phosphoserine.

As to quaternary structure, component of the DNA polymerase epsilon complex consisting of four subunits: the catalytic subunit POLE and the accessory subunits POLE2, POLE3 and POLE4. Interaction with POLE3 is a prerequisite for further binding with POLE and POLE2.

It localises to the nucleus. In terms of biological role, accessory component of the DNA polymerase epsilon complex. Participates in DNA repair and in chromosomal DNA replication. The protein is DNA polymerase epsilon subunit 4 (POLE4) of Homo sapiens (Human).